A 201-amino-acid polypeptide reads, in one-letter code: 3-isopropylmalate dehydratase small subunit (201 aa).

The protein belongs to the LeuD family. LeuD type 1 subfamily. In terms of assembly, heterodimer of LeuC and LeuD.

It catalyses the reaction (2R,3S)-3-isopropylmalate = (2S)-2-isopropylmalate. The protein operates within amino-acid biosynthesis; L-leucine biosynthesis; L-leucine from 3-methyl-2-oxobutanoate: step 2/4. Its function is as follows. Catalyzes the isomerization between 2-isopropylmalate and 3-isopropylmalate, via the formation of 2-isopropylmaleate. This chain is 3-isopropylmalate dehydratase small subunit, found in Xanthobacter autotrophicus (strain ATCC BAA-1158 / Py2).